A 238-amino-acid chain; its full sequence is Gem-associated protein 8 (238 aa).

The interval 66–127 is disordered; sequence AGHPWDSQGQ…LESDSDDEVE (62 aa). 2 stretches are compositionally biased toward polar residues: residues 72 to 82 and 96 to 108; these read SQGQHMAQQES and LRNS…STRG. A compositionally biased stretch (acidic residues) spans 113–127; the sequence is CEEEELESDSDDEVE. Serine 122 is subject to Phosphoserine. A coiled-coil region spans residues 131 to 164; the sequence is SNMEITEELRQYFAQTERHREERRRQQQLDAERL.

As to quaternary structure, part of the core SMN complex that contains SMN1, GEMIN2/SIP1, DDX20/GEMIN3, GEMIN4, GEMIN5, GEMIN6, GEMIN7, GEMIN8 and STRAP/UNRIP. Part of the SMN-Sm complex that contains SMN1, GEMIN2/SIP1, DDX20/GEMIN3, GEMIN4, GEMIN5, GEMIN6, GEMIN7, GEMIN8, STRAP/UNRIP and the Sm proteins SNRPB, SNRPD1, SNRPD2, SNRPD3, SNRPE, SNRPF and SNRPG. Interacts with GEMIN6; the interaction is direct. Interacts with GEMIN7; the interaction is direct. Interacts with SMN1; the interaction is direct. Interacts with GEMIN4; the interaction is direct. In terms of tissue distribution, widely expressed in embryonic tissues (at protein level).

It is found in the nucleus. Its subcellular location is the gem. The protein localises to the cytoplasm. In terms of biological role, the SMN complex catalyzes the assembly of small nuclear ribonucleoproteins (snRNPs), the building blocks of the spliceosome, and thereby plays an important role in the splicing of cellular pre-mRNAs. Most spliceosomal snRNPs contain a common set of Sm proteins SNRPB, SNRPD1, SNRPD2, SNRPD3, SNRPE, SNRPF and SNRPG that assemble in a heptameric protein ring on the Sm site of the small nuclear RNA to form the core snRNP (Sm core). In the cytosol, the Sm proteins SNRPD1, SNRPD2, SNRPE, SNRPF and SNRPG are trapped in an inactive 6S pICln-Sm complex by the chaperone CLNS1A that controls the assembly of the core snRNP. To assemble core snRNPs, the SMN complex accepts the trapped 5Sm proteins from CLNS1A forming an intermediate. Binding of snRNA inside 5Sm triggers eviction of the SMN complex, thereby allowing binding of SNRPD3 and SNRPB to complete assembly of the core snRNP. The chain is Gem-associated protein 8 (Gemin8) from Mus musculus (Mouse).